The following is a 152-amino-acid chain: Transcriptional regulator MraZ (152 aa).

SpoVT-AbrB domains are found at residues 5 to 52 (ATLV…PLPE) and 81 to 124 (ASEC…DEQT).

This sequence belongs to the MraZ family. In terms of assembly, forms oligomers.

Its subcellular location is the cytoplasm. The protein resides in the nucleoid. Negatively regulates its own expression and that of the subsequent genes in the proximal part of the division and cell wall (dcw) gene cluster. Acts by binding directly to DNA. May also regulate the expression of genes outside the dcw cluster. The sequence is that of Transcriptional regulator MraZ from Pectobacterium carotovorum subsp. carotovorum (strain PC1).